A 156-amino-acid chain; its full sequence is Putative pre-16S rRNA nuclease (156 aa).

It belongs to the YqgF nuclease family.

Its subcellular location is the cytoplasm. In terms of biological role, could be a nuclease involved in processing of the 5'-end of pre-16S rRNA. In Ehrlichia canis (strain Jake), this protein is Putative pre-16S rRNA nuclease.